Reading from the N-terminus, the 715-residue chain is Protein sneaky (715 aa).

The Cytoplasmic segment spans residues 1 to 32; sequence MLSLLTRPFLPIFCFLYGPQSEGSTRIQCLRR. A helical transmembrane segment spans residues 33 to 53; sequence FVTFLLGLVLGFLLWKLAALN. The Extracellular portion of the chain corresponds to 54–66; the sequence is FTLGRLFVNGATD. Residues 67–87 form a helical membrane-spanning segment; it reads LYVFIIFVLVTGTIFMLSLPV. The Cytoplasmic segment spans residues 88–109; that stretch reads RAVILLIFVALVGKSGRTYLRA. The chain crosses the membrane as a helical span at residues 110-130; the sequence is VAFAFIISGPIANLVENAGEV. At 131–373 the chain is on the extracellular side; it reads ARVFVCTTVL…FERQKRIFNK (243 aa). A helical membrane pass occupies residues 374 to 394; sequence VMGILQKILCLFMLRMVYVSI. At 395-457 the chain is on the cytoplasmic side; that stretch reads NYYVKYLNDV…FSRTHHESTT (63 aa). Residues 458–478 traverse the membrane as a helical segment; sequence VCFNLLQFLLELVTAGLFILI. The Extracellular segment spans residues 479 to 553; that stretch reads DHLVVELLQI…NAHVLPKKMY (75 aa). The chain crosses the membrane as a helical span at residues 554–574; it reads YQLILLYLIIIVLIYQSTTFL. The Cytoplasmic portion of the chain corresponds to 575-715; the sequence is RMRRVICSFF…VEVYTYRKEK (141 aa). Residues 655–691 form an RING-type; degenerate zinc finger; that stretch reads CMICRGLEDSTFTVCGNCGLPYCDDCAEDLNSVCFQC.

As to expression, specifically expressed in testis.

It is found in the cytoplasmic vesicle. Its subcellular location is the secretory vesicle. It localises to the acrosome membrane. The protein resides in the cytoplasm. The protein localises to the cytoplasmic vesicle membrane. Functionally, component of the sperm acrosome membrane. Required for breakdown of the sperm plasma membrane after sperm entry into the egg, which is an essential prerequisite for successful fertilization. This is Protein sneaky from Drosophila melanogaster (Fruit fly).